The chain runs to 190 residues: Putative transcription factor ovo-like protein 3 (190 aa).

Disordered regions lie at residues 1–21 (MPRA…GHLP) and 35–65 (SLGG…SAPR). A compositionally biased stretch (polar residues) spans 41–62 (AQQSSSVRDPWTAQPTQGNLTS). 4 C2H2-type zinc fingers span residues 70–92 (LGCP…LKCH), 98–120 (HLCR…MRTH), 126–149 (FRCS…AKVH), and 165–187 (HVCE…RALH).

It belongs to the krueppel C2H2-type zinc-finger protein family.

The protein localises to the nucleus. In terms of biological role, may act as a transcription regulator. The protein is Putative transcription factor ovo-like protein 3 (OVOL3) of Homo sapiens (Human).